We begin with the raw amino-acid sequence, 78 residues long: ATP synthase subunit a (78 aa).

3 helical membrane-spanning segments follow: residues 13–33 (LFGNVYAKEMLMILLVGLGTS), 35–55 (FLGAFGAFLPLIVWQAFGMFI), and 57–77 (SLQAFIFAMLAMVYMAHKVEA).

It belongs to the ATPase A chain family. As to quaternary structure, F-type ATPases have 2 components, CF(1) - the catalytic core - and CF(0) - the membrane proton channel. CF(1) has five subunits: alpha(3), beta(3), gamma(1), delta(1), epsilon(1). CF(0) has three main subunits: a(1), b(2) and c(9-12). The alpha and beta chains form an alternating ring which encloses part of the gamma chain. CF(1) is attached to CF(0) by a central stalk formed by the gamma and epsilon chains, while a peripheral stalk is formed by the delta and b chains.

It is found in the cell membrane. Key component of the proton channel; it plays a direct role in the translocation of protons across the membrane. This chain is ATP synthase subunit a (atpB), found in Alkalihalobacillus alcalophilus (Bacillus alcalophilus).